A 192-amino-acid polypeptide reads, in one-letter code: UPF0312 protein PputGB1_5030 (192 aa).

Residues methionine 1–alanine 23 form the signal peptide.

The protein belongs to the UPF0312 family. Type 1 subfamily.

It is found in the periplasm. The polypeptide is UPF0312 protein PputGB1_5030 (Pseudomonas putida (strain GB-1)).